Here is a 428-residue protein sequence, read N- to C-terminus: Bifunctional protein GlmU (428 aa).

Residues 1–221 form a pyrophosphorylase region; the sequence is MDIVILAAGC…ERKAMGINTR (221 aa). UDP-N-acetyl-alpha-D-glucosamine is bound by residues 6–9, lysine 20, glutamine 74, 79–80, 103–105, glycine 140, and asparagine 219; these read LAAG, GT, and YGD. Residue aspartate 105 coordinates Mg(2+). Asparagine 219 provides a ligand contact to Mg(2+). Positions 222-242 are linker; it reads ADLAIAESYFQCMKRASFLQS. The interval 243-428 is N-acetyltransferase; it reads GVTLTSPDQV…TTKPEYKTRR (186 aa). UDP-N-acetyl-alpha-D-glucosamine is bound by residues arginine 308 and lysine 326. Histidine 338 serves as the catalytic Proton acceptor. UDP-N-acetyl-alpha-D-glucosamine is bound by residues tyrosine 341 and asparagine 352. Residues alanine 355, 361–362, alanine 398, and arginine 415 contribute to the acetyl-CoA site; that span reads NY.

This sequence in the N-terminal section; belongs to the N-acetylglucosamine-1-phosphate uridyltransferase family. The protein in the C-terminal section; belongs to the transferase hexapeptide repeat family. Homotrimer. Mg(2+) serves as cofactor.

It localises to the cytoplasm. The enzyme catalyses alpha-D-glucosamine 1-phosphate + acetyl-CoA = N-acetyl-alpha-D-glucosamine 1-phosphate + CoA + H(+). The catalysed reaction is N-acetyl-alpha-D-glucosamine 1-phosphate + UTP + H(+) = UDP-N-acetyl-alpha-D-glucosamine + diphosphate. It participates in nucleotide-sugar biosynthesis; UDP-N-acetyl-alpha-D-glucosamine biosynthesis; N-acetyl-alpha-D-glucosamine 1-phosphate from alpha-D-glucosamine 6-phosphate (route II): step 2/2. It functions in the pathway nucleotide-sugar biosynthesis; UDP-N-acetyl-alpha-D-glucosamine biosynthesis; UDP-N-acetyl-alpha-D-glucosamine from N-acetyl-alpha-D-glucosamine 1-phosphate: step 1/1. The protein operates within bacterial outer membrane biogenesis; LPS lipid A biosynthesis. Functionally, catalyzes the last two sequential reactions in the de novo biosynthetic pathway for UDP-N-acetylglucosamine (UDP-GlcNAc). The C-terminal domain catalyzes the transfer of acetyl group from acetyl coenzyme A to glucosamine-1-phosphate (GlcN-1-P) to produce N-acetylglucosamine-1-phosphate (GlcNAc-1-P), which is converted into UDP-GlcNAc by the transfer of uridine 5-monophosphate (from uridine 5-triphosphate), a reaction catalyzed by the N-terminal domain. This is Bifunctional protein GlmU from Anaplasma marginale (strain Florida).